The primary structure comprises 305 residues: Porphobilinogen deaminase (305 aa).

S-(dipyrrolylmethanemethyl)cysteine is present on Cys-240.

Belongs to the HMBS family. As to quaternary structure, monomer. Requires dipyrromethane as cofactor.

The catalysed reaction is 4 porphobilinogen + H2O = hydroxymethylbilane + 4 NH4(+). It participates in porphyrin-containing compound metabolism; protoporphyrin-IX biosynthesis; coproporphyrinogen-III from 5-aminolevulinate: step 2/4. In terms of biological role, tetrapolymerization of the monopyrrole PBG into the hydroxymethylbilane pre-uroporphyrinogen in several discrete steps. The sequence is that of Porphobilinogen deaminase from Xylella fastidiosa (strain M23).